The chain runs to 395 residues: Putative 8-amino-7-oxononanoate synthase (395 aa).

Arginine 23 lines the substrate pocket. 110-111 contributes to the pyridoxal 5'-phosphate binding site; sequence GY. Residue histidine 135 participates in substrate binding. Residues serine 182, 207-210, and 239-242 each bind pyridoxal 5'-phosphate; these read DEAH and TFSK. Lysine 242 is subject to N6-(pyridoxal phosphate)lysine. Residue threonine 356 coordinates substrate.

Belongs to the class-II pyridoxal-phosphate-dependent aminotransferase family. BioF subfamily. Homodimer. Pyridoxal 5'-phosphate serves as cofactor.

It carries out the reaction 6-carboxyhexanoyl-[ACP] + L-alanine + H(+) = (8S)-8-amino-7-oxononanoate + holo-[ACP] + CO2. Its pathway is cofactor biosynthesis; biotin biosynthesis. Functionally, catalyzes the decarboxylative condensation of pimeloyl-[acyl-carrier protein] and L-alanine to produce 8-amino-7-oxononanoate (AON), [acyl-carrier protein], and carbon dioxide. This is Putative 8-amino-7-oxononanoate synthase (bioF) from Bacillus mycoides (strain KBAB4) (Bacillus weihenstephanensis).